Reading from the N-terminus, the 541-residue chain is Putative transferase YhbX (541 aa).

Over 1–60 (MTVFNKFARTFKSHWLLYLCVIVFGITNLVASSGAHMVQRLLFFVLTILVVKRISSLPLR) the chain is Periplasmic. Residues 61–81 (LLVAAPFVLLTAADMSISLYS) form a helical membrane-spanning segment. Residues 82–110 (WCTFGTTFNDGFAISVLQSDPDEVVKMLG) are Cytoplasmic-facing. The helical transmembrane segment at 111–131 (MYIPYLCAFAFLSLLFLAVII) threads the bilayer. Residues 132 to 141 (KYDVSLPTKK) lie on the Periplasmic side of the membrane. Residues 142–162 (VTGILLLIVISGSLFSACQFA) traverse the membrane as a helical segment. Residues 163 to 264 (YKDAKNKKAF…RKQIKLFNQA (102 aa)) lie on the Cytoplasmic side of the membrane. Residues 265–285 (ISGAPYTALSVPLSLTADSVL) form a helical membrane-spanning segment. The Periplasmic portion of the chain corresponds to 286–541 (SHDIHNYPDN…QGNPTPEGQG (256 aa)).

It belongs to the phosphoethanolamine transferase family.

The protein localises to the cell inner membrane. Functionally, probably does not transfer phosphoethanolamine to lipid A. This chain is Putative transferase YhbX (yhbX), found in Escherichia coli (strain K12).